A 427-amino-acid polypeptide reads, in one-letter code: NADH-quinone oxidoreductase subunit 14 (427 aa).

14 helical membrane-spanning segments follow: residues 1–21, 30–50, 57–77, 79–99, 104–124, 137–157, 172–192, 204–224, 230–250, 257–277, 280–300, 322–342, 360–380, and 400–420; these read MTLAILAVFSVALTLLGFVLP, LLGLALALASLLLTWGKPFAF, GVSQVFTLLALLGALWTVGLV, SGRFEFYLLVLYAALGMHLLA, LLLMLVALEALSLPLYALATW, FLLGALAAAFFLYGAALFYGA, YALALGLLLVGLGFKAALAPF, PTPVVLFMATSVKAAAFAALL, PEALALLVALSVVVGNLAALA, LLAYSSIAHAGYMALALYTGN, ALGFYLLTYVLATGLAFAVLS, LGLAFLVAMLSLLGLPPLAGF, VLVLALVTSAVSAYYYLGLGL, and AAVVAAGVLLLALGLLPGLVL.

Belongs to the complex I subunit 2 family. As to quaternary structure, NDH-1 is composed of 15 different subunits, Nqo1 to Nqo15. The complex has a L-shaped structure, with the hydrophobic arm (subunits Nqo7, Nqo8 and Nqo10 to Nqo14) embedded in the membrane and the hydrophilic peripheral arm (subunits Nqo1 to Nqo6, Nqo9 and Nqo15) protruding into the bacterial cytoplasm. The hydrophilic domain contains all the redox centers.

The protein resides in the cell inner membrane. It catalyses the reaction a quinone + NADH + 5 H(+)(in) = a quinol + NAD(+) + 4 H(+)(out). NDH-1 shuttles electrons from NADH, via FMN and iron-sulfur (Fe-S) centers, to quinones in the respiratory chain. The immediate electron acceptor for the enzyme in this species is menaquinone. Couples the redox reaction to proton translocation (for every two electrons transferred, four hydrogen ions are translocated across the cytoplasmic membrane), and thus conserves the redox energy in a proton gradient required for the synthesis of ATP. The sequence is that of NADH-quinone oxidoreductase subunit 14 (nqo14) from Thermus thermophilus (strain ATCC 27634 / DSM 579 / HB8).